The chain runs to 89 residues: Small ribosomal subunit protein uS15 (89 aa).

Basic and acidic residues predominate over residues 1-18 (MALSAQEKDAIVKEHQTS). The interval 1–25 (MALSAQEKDAIVKEHQTSETDTGSP) is disordered.

Belongs to the universal ribosomal protein uS15 family. Part of the 30S ribosomal subunit. Forms a bridge to the 50S subunit in the 70S ribosome, contacting the 23S rRNA.

Functionally, one of the primary rRNA binding proteins, it binds directly to 16S rRNA where it helps nucleate assembly of the platform of the 30S subunit by binding and bridging several RNA helices of the 16S rRNA. In terms of biological role, forms an intersubunit bridge (bridge B4) with the 23S rRNA of the 50S subunit in the ribosome. This is Small ribosomal subunit protein uS15 from Teredinibacter turnerae (strain ATCC 39867 / T7901).